The chain runs to 342 residues: Cyclin-dependent kinase-like 4 (342 aa).

The Protein kinase domain occupies 4-286 (YEKLAKIGEG…CAQLLDSAYF (283 aa)). ATP is bound by residues 10-18 (IGEGSYGVV) and K33. Residues 45–51 (RKIALRE) carry the [NKR]KIAxRE motif. D126 (proton acceptor) is an active-site residue. A disordered region spans residues 295-328 (KRKARSEGRSRRRQQNQLLPLIPGSHISPTPDGR).

This sequence belongs to the protein kinase superfamily. CMGC Ser/Thr protein kinase family. CDC2/CDKX subfamily.

It localises to the cytoplasm. It catalyses the reaction L-seryl-[protein] + ATP = O-phospho-L-seryl-[protein] + ADP + H(+). It carries out the reaction L-threonyl-[protein] + ATP = O-phospho-L-threonyl-[protein] + ADP + H(+). The protein is Cyclin-dependent kinase-like 4 (Cdkl4) of Mus musculus (Mouse).